We begin with the raw amino-acid sequence, 303 residues long: Aspartate carbamoyltransferase catalytic subunit (303 aa).

Residues R51 and T52 each contribute to the carbamoyl phosphate site. K80 provides a ligand contact to L-aspartate. Carbamoyl phosphate-binding residues include R101, H129, and Q132. L-aspartate-binding residues include R162 and R221. Residues L260 and P261 each contribute to the carbamoyl phosphate site.

This sequence belongs to the aspartate/ornithine carbamoyltransferase superfamily. ATCase family. Heterooligomer of catalytic and regulatory chains.

It catalyses the reaction carbamoyl phosphate + L-aspartate = N-carbamoyl-L-aspartate + phosphate + H(+). The protein operates within pyrimidine metabolism; UMP biosynthesis via de novo pathway; (S)-dihydroorotate from bicarbonate: step 2/3. Its function is as follows. Catalyzes the condensation of carbamoyl phosphate and aspartate to form carbamoyl aspartate and inorganic phosphate, the committed step in the de novo pyrimidine nucleotide biosynthesis pathway. The sequence is that of Aspartate carbamoyltransferase catalytic subunit from Saccharolobus islandicus (strain M.16.27) (Sulfolobus islandicus).